The following is a 372-amino-acid chain: Putative glutamate--cysteine ligase 2 (372 aa).

It belongs to the glutamate--cysteine ligase type 2 family. YbdK subfamily. Homodimer.

It catalyses the reaction L-cysteine + L-glutamate + ATP = gamma-L-glutamyl-L-cysteine + ADP + phosphate + H(+). In terms of biological role, ATP-dependent carboxylate-amine ligase which exhibits weak glutamate--cysteine ligase activity. In Escherichia coli (strain K12 / MC4100 / BW2952), this protein is Putative glutamate--cysteine ligase 2 (ybdK).